Here is a 63-residue protein sequence, read N- to C-terminus: Conotoxin TxMRCL-D012 (63 aa).

The signal sequence occupies residues 1 to 19; sequence MRCLPVFVILLLLIASTPS. Residues 20-47 constitute a propeptide that is removed on maturation; it reads DTVPLKTKDDMPQASFHGNARRTLQMLS. Gln50 carries the pyrrolidone carboxylic acid modification.

Belongs to the conotoxin T superfamily. Contains 2 disulfide bonds that can be either 'C1-C3, C2-C4' or 'C1-C4, C2-C3', since these disulfide connectivities have been observed for conotoxins with cysteine framework V (for examples, see AC P0DQQ7 and AC P81755). As to expression, expressed by the venom duct.

The protein localises to the secreted. In Conus textile (Cloth-of-gold cone), this protein is Conotoxin TxMRCL-D012.